The chain runs to 162 residues: 3-dehydroquinate dehydratase (162 aa).

Y22 acts as the Proton acceptor in catalysis. 3 residues coordinate substrate: N73, H79, and D86. The active-site Proton donor is the H99. Residues 100 to 101 (LS) and R110 contribute to the substrate site.

Belongs to the type-II 3-dehydroquinase family. As to quaternary structure, homododecamer.

It catalyses the reaction 3-dehydroquinate = 3-dehydroshikimate + H2O. It participates in metabolic intermediate biosynthesis; chorismate biosynthesis; chorismate from D-erythrose 4-phosphate and phosphoenolpyruvate: step 3/7. Functionally, catalyzes a trans-dehydration via an enolate intermediate. This chain is 3-dehydroquinate dehydratase, found in Sulfurovum sp. (strain NBC37-1).